The chain runs to 1170 residues: RNA-binding protein 33 (1170 aa).

2 disordered regions span residues 1 to 152 (MAAA…EGHE) and 199 to 221 (KDIK…LRFK). At Ala2 the chain carries N-acetylalanine. The segment covering 20-36 (QFDKPGAERSWRRRAAD) has biased composition (basic and acidic residues). Positions 37 to 49 (EDWDSELEDDLLG) are enriched in acidic residues. Ser41 is subject to Phosphoserine. The segment covering 82 to 108 (FSSQGVTISLNATSGMVTSFELSDNTN) has biased composition (polar residues). Acidic residues-rich tracts occupy residues 112–126 (GEQE…GEDE) and 203–214 (EESDEEEEDDEE). Phosphoserine occurs at positions 205 and 233. Disordered stretches follow at residues 259–708 (FEER…NSNL), 721–784 (MSSS…PDED), 833–863 (QLYA…PFPG), and 942–1050 (AVPQ…VPPG). Over residues 267–278 (KQGRYSSRRGGR) the composition is skewed to basic residues. Residues 289–306 (GDQRRESTERGRMKDHRP) are compositionally biased toward basic and acidic residues. Positions 311-329 (TQPPVVPQAPPPPPPPPQQ) are enriched in pro residues. Composition is skewed to low complexity over residues 335-348 (LFQP…LPVQ), 357-372 (QGMH…RMMM), and 394-403 (TVVTPVQVPL). A compositionally biased stretch (pro residues) spans 419–433 (FPGPPEFPQHTPGPV). Arg470 is subject to Asymmetric dimethylarginine. Pro residues-rich tracts occupy residues 481–490 (SPPPPPPPPT), 554–568 (FIPP…PGQP), and 582–630 (LHPP…PQHP). The segment covering 632 to 642 (QHQHHHHHHHL) has biased composition (basic residues). 2 stretches are compositionally biased toward polar residues: residues 662-708 (QTAQ…NSNL) and 721-732 (MSSSRCSATPSA). Ser741 and Ser765 each carry phosphoserine. Positions 789–835 (LYRLKIEEQKRLREEILKQKELRRQQQAGARKKELLERLAQQQQQLY) form a coiled coil. Residue Ser951 is modified to Phosphoserine. Residue Lys960 forms a Glycyl lysine isopeptide (Lys-Gly) (interchain with G-Cter in SUMO2) linkage. 2 positions are modified to phosphoserine: Ser973 and Ser991. Residue Arg1028 is modified to Asymmetric dimethylarginine; alternate. Arg1028 is modified (omega-N-methylarginine; alternate). Residues 1098-1170 (CVVSVEGLSS…SHINVALIVE (73 aa)) form the RRM domain.

Associates with the NXF1-NXT1 RNA export complex. Interacts with ALKBH5; facilitating ALKBH5 recruitment to m6A-containing transcripts. Interacts with SENP1; promoting ALKBH5 deSUMOylation and subsequent activation.

It localises to the nucleus. The protein resides in the cytoplasm. In terms of biological role, RNA reader protein, which recognizes and binds specific RNAs, thereby regulating RNA metabolic processes, such as mRNA export, mRNA stability and/or translation. Binds a subset of intronless RNAs containing GC-rich elements, such as NORAD, and promotes their nuclear export by recruiting target RNAs to components of the NXF1-NXT1 RNA export machinery. Specifically recognizes and binds N6-methyladenosine (m6A)-containing mRNAs, promoting their demethylation by ALKBH5. Acts as an molecular adapter, which (1) promotes ALKBH5 recruitment to m6A-containing transcripts and (2) activates ALKBH5 demethylase activity by recruiting SENP1, leading to ALKBH5 deSUMOylation and subsequent activation. This chain is RNA-binding protein 33, found in Homo sapiens (Human).